The primary structure comprises 413 residues: Argininosuccinate synthase (413 aa).

Residue 8–16 (AYSGGLDTS) participates in ATP binding. Y87 is an L-citrulline binding site. G117 lines the ATP pocket. The L-aspartate site is built by T119, N123, and D124. Residue N123 participates in L-citrulline binding. Residues R127, S175, E259, and Y271 each coordinate L-citrulline.

It belongs to the argininosuccinate synthase family. Type 1 subfamily. In terms of assembly, homotetramer.

It is found in the cytoplasm. It catalyses the reaction L-citrulline + L-aspartate + ATP = 2-(N(omega)-L-arginino)succinate + AMP + diphosphate + H(+). Its pathway is amino-acid biosynthesis; L-arginine biosynthesis; L-arginine from L-ornithine and carbamoyl phosphate: step 2/3. The polypeptide is Argininosuccinate synthase (Micrococcus luteus (strain ATCC 4698 / DSM 20030 / JCM 1464 / CCM 169 / CCUG 5858 / IAM 1056 / NBRC 3333 / NCIMB 9278 / NCTC 2665 / VKM Ac-2230) (Micrococcus lysodeikticus)).